Reading from the N-terminus, the 179-residue chain is Deoxyuridine 5'-triphosphate nucleotidohydrolase (179 aa).

Substrate is bound by residues 90-92 (RSG), Asn103, 107-109 (TVD), and Lys117.

It belongs to the dUTPase family. The cofactor is Mg(2+).

It catalyses the reaction dUTP + H2O = dUMP + diphosphate + H(+). It participates in pyrimidine metabolism; dUMP biosynthesis; dUMP from dCTP (dUTP route): step 2/2. Its function is as follows. This enzyme is involved in nucleotide metabolism: it produces dUMP, the immediate precursor of thymidine nucleotides and it decreases the intracellular concentration of dUTP so that uracil cannot be incorporated into DNA. The polypeptide is Deoxyuridine 5'-triphosphate nucleotidohydrolase (Thermobifida fusca (strain YX)).